The following is an 81-amino-acid chain: Toxin F-VIII (81 aa).

Residues 1–21 form the signal peptide; the sequence is MKTLLLTLLVVTIVCLDLAST. 4 disulfides stabilise this stretch: Cys24-Cys43, Cys38-Cys60, Cys62-Cys73, and Cys74-Cys79.

Belongs to the three-finger toxin family. Short-chain subfamily. Orphan group XI sub-subfamily. As to expression, expressed by the venom gland.

The protein localises to the secreted. Is cytotoxic against A549 cells (LC(50)=106 ug/ml). The sequence is that of Toxin F-VIII from Dendroaspis angusticeps (Eastern green mamba).